The following is an 86-amino-acid chain: Palustrin-3b (86 aa).

A signal peptide spans 1 to 22 (MFTLKKPLLLIVLLGIISLSLC). Residues 23-36 (EQERNADEDEESEI) constitute a propeptide that is removed on maturation. Cys81 and Cys86 are disulfide-bonded.

In terms of tissue distribution, expressed by the skin glands.

Its subcellular location is the secreted. Functionally, antimicrobial peptide. In Odorrana versabilis (Chinese bamboo leaf odorous frog), this protein is Palustrin-3b.